Here is a 146-residue protein sequence, read N- to C-terminus: Putative pre-16S rRNA nuclease (146 aa).

It belongs to the YqgF nuclease family.

It localises to the cytoplasm. Could be a nuclease involved in processing of the 5'-end of pre-16S rRNA. This chain is Putative pre-16S rRNA nuclease, found in Dechloromonas aromatica (strain RCB).